Here is a 126-residue protein sequence, read N- to C-terminus: Lymphocyte antigen 6 complex locus protein G6c (126 aa).

The first 19 residues, 1–19, serve as a signal peptide directing secretion; the sequence is MKHLLLLTLSALLYCWVSA. A UPAR/Ly6 domain is found at 21-112; it reads TRCHSCYKVP…PRPTPALALI (92 aa). Cystine bridges form between C23–C48, C26–C34, and C40–C66. An N-linked (GlcNAc...) (high mannose) asparagine glycan is attached at N89. Cysteines 93 and 98 form a disulfide. S100 carries GPI-anchor amidated serine lipidation. Positions 101 to 126 are cleaved as a propeptide — removed in mature form; sequence PAPRPTPALALISLTSLAGLGLWLLH.

Monomer. Post-translationally, N-glycosylated. In terms of tissue distribution, highly expressed at the leading edges of cells, on filopodia.

The protein resides in the cell membrane. The polypeptide is Lymphocyte antigen 6 complex locus protein G6c (Ly6g6c) (Mus musculus (Mouse)).